Reading from the N-terminus, the 434-residue chain is 23S rRNA (uracil(1939)-C(5))-methyltransferase RlmD (434 aa).

In terms of domain architecture, TRAM spans 10-68 (RVTTRQIITVTVNDLDPFGQGVARHQGKALFVSGVLPHEQAEVVLVEDKKQYARAEVKR). Residues Cys-81, Cys-87, Cys-90, and Cys-162 each coordinate [4Fe-4S] cluster. 6 residues coordinate S-adenosyl-L-methionine: Gln-265, Phe-294, Asn-299, Glu-315, Asn-342, and Asp-363. The Nucleophile role is filled by Cys-389.

The protein belongs to the class I-like SAM-binding methyltransferase superfamily. RNA M5U methyltransferase family. RlmD subfamily.

The catalysed reaction is uridine(1939) in 23S rRNA + S-adenosyl-L-methionine = 5-methyluridine(1939) in 23S rRNA + S-adenosyl-L-homocysteine + H(+). In terms of biological role, catalyzes the formation of 5-methyl-uridine at position 1939 (m5U1939) in 23S rRNA. This Klebsiella pneumoniae subsp. pneumoniae (strain ATCC 700721 / MGH 78578) protein is 23S rRNA (uracil(1939)-C(5))-methyltransferase RlmD.